The following is a 126-amino-acid chain: Glycine cleavage system H protein (126 aa).

The Lipoyl-binding domain maps to 22–103 (KAYIGITDYA…PYGSWMALVE (82 aa)). Position 63 is an N6-lipoyllysine (Lys63).

It belongs to the GcvH family. As to quaternary structure, the glycine cleavage system is composed of four proteins: P, T, L and H. (R)-lipoate is required as a cofactor.

The glycine cleavage system catalyzes the degradation of glycine. The H protein shuttles the methylamine group of glycine from the P protein to the T protein. The protein is Glycine cleavage system H protein of Thermoanaerobacter pseudethanolicus (strain ATCC 33223 / 39E) (Clostridium thermohydrosulfuricum).